Here is a 273-residue protein sequence, read N- to C-terminus: Shikimate dehydrogenase (NADP(+)) (273 aa).

Shikimate contacts are provided by residues 15–17 (SKS) and Thr62. Lys66 (proton acceptor) is an active-site residue. Asp78 contacts NADP(+). Shikimate is bound by residues Asn87 and Asp103. NADP(+) is bound by residues 127–131 (GAGGA), 150–155 (NRTYAR), and Met214. Position 216 (Tyr216) interacts with shikimate. Gly238 is a binding site for NADP(+).

This sequence belongs to the shikimate dehydrogenase family. In terms of assembly, homodimer.

The catalysed reaction is shikimate + NADP(+) = 3-dehydroshikimate + NADPH + H(+). It participates in metabolic intermediate biosynthesis; chorismate biosynthesis; chorismate from D-erythrose 4-phosphate and phosphoenolpyruvate: step 4/7. Its function is as follows. Involved in the biosynthesis of the chorismate, which leads to the biosynthesis of aromatic amino acids. Catalyzes the reversible NADPH linked reduction of 3-dehydroshikimate (DHSA) to yield shikimate (SA). The chain is Shikimate dehydrogenase (NADP(+)) from Yersinia enterocolitica serotype O:8 / biotype 1B (strain NCTC 13174 / 8081).